A 225-amino-acid chain; its full sequence is Transmembrane protein 40 (225 aa).

At Met1 the chain carries N-acetylmethionine. The span at 1-14 (MEASGSSSQSQDSG) shows a compositional bias: low complexity. Residues 1–96 (MEASGSSSQS…RRDSLRGADH (96 aa)) are disordered. A compositionally biased stretch (basic and acidic residues) spans 15 to 29 (GVHRETEDHYQETEL). The segment covering 30 to 39 (HKHHGKARER) has biased composition (basic residues). Residues 46–68 (SSSSSSSSSSSSSSSSSSSSSSD) show a composition bias toward low complexity. A compositionally biased stretch (basic residues) spans 78–87 (GPRKHRRRPR). Phosphoserine is present on Ser129. 2 helical membrane-spanning segments follow: residues 152–172 (FFHF…YHYY) and 179–199 (LGVG…FGLV).

The protein resides in the membrane. This Mus musculus (Mouse) protein is Transmembrane protein 40 (Tmem40).